The following is a 165-amino-acid chain: Thiol peroxidase (165 aa).

Positions Pro17–Ala165 constitute a Thioredoxin domain. Catalysis depends on Cys59, which acts as the Cysteine sulfenic acid (-SOH) intermediate. A disulfide bond links Cys59 and Cys93.

This sequence belongs to the peroxiredoxin family. Tpx subfamily. Homodimer.

The catalysed reaction is a hydroperoxide + [thioredoxin]-dithiol = an alcohol + [thioredoxin]-disulfide + H2O. Its function is as follows. Thiol-specific peroxidase that catalyzes the reduction of hydrogen peroxide and organic hydroperoxides to water and alcohols, respectively. Plays a role in cell protection against oxidative stress by detoxifying peroxides. In Haemophilus influenzae (strain ATCC 51907 / DSM 11121 / KW20 / Rd), this protein is Thiol peroxidase.